A 109-amino-acid polypeptide reads, in one-letter code: Phosphoribosyl-ATP pyrophosphatase (109 aa).

The protein belongs to the PRA-PH family.

It localises to the cytoplasm. It carries out the reaction 1-(5-phospho-beta-D-ribosyl)-ATP + H2O = 1-(5-phospho-beta-D-ribosyl)-5'-AMP + diphosphate + H(+). It participates in amino-acid biosynthesis; L-histidine biosynthesis; L-histidine from 5-phospho-alpha-D-ribose 1-diphosphate: step 2/9. In Paramagnetospirillum magneticum (strain ATCC 700264 / AMB-1) (Magnetospirillum magneticum), this protein is Phosphoribosyl-ATP pyrophosphatase.